The primary structure comprises 255 residues: MNTKVPIYSVSGEMKGEIDLPEVFDTEVREDIIRRAFRAISLSMRQPYGSSPLAGMRRVGHTTRPGLGISRMPRIAGGSRVVGIASAVGGKSAHSPRTTKNLYVKINDRERKMAKYSAIALTASVEAVKKRGHRFKEGLKLPIVVEDGVEGINKTKDAIALLKNLGVYEDIERSREGKHIRAGRGKMRGRRYKQPKSVLIVARNSSAMKAFRSLPGVDIASPNSLSIRKLAPGGVGGRLTIFTEGAIESLKEVDQ.

The protein belongs to the universal ribosomal protein uL4 family. In terms of assembly, part of the 50S ribosomal subunit.

Functionally, one of the primary rRNA binding proteins, this protein initially binds near the 5'-end of the 23S rRNA. It is important during the early stages of 50S assembly. It makes multiple contacts with different domains of the 23S rRNA in the assembled 50S subunit and ribosome. Forms part of the polypeptide exit tunnel. The sequence is that of Large ribosomal subunit protein uL4 from Thermoplasma acidophilum (strain ATCC 25905 / DSM 1728 / JCM 9062 / NBRC 15155 / AMRC-C165).